The primary structure comprises 288 residues: MTDAQIENKFKLAVDYITNNSGKLSNIKNEEQLYLYCNYKQATIGDCNTKAPPFYDYIGKSKWNSWNSLKGVEKIVAMNSYISLVNALSPGWDSNIKVERATQSVFLNDEEFKELEKKEKEEKEELKKLEEENGGEIEKPKSKWMGPVLSKFSLVDDETLEKLEKNTKQDLGYWVSVNDIERVKKEIENDKNIINEVDEDGRTALIWACDRGYFEIAKLLIENGSNVNVQDGEGMTPLHYAVVCDQFEICKLLLSQSSIDKSIKDNSDSIPSDFIDSSTSENIKSLFK.

One can recognise an ACB domain in the interval 6–94 (IENKFKLAVD…VNALSPGWDS (89 aa)). Residues 36–40 (YCNYK), K62, and Y81 each bind an acyl-CoA. ANK repeat units lie at residues 200–229 (DGRT…NVNV) and 233–263 (EGMT…DKSI).

It is found in the cytoplasm. In terms of biological role, binds long-chain acyl-coenzyme A molecules with a strong preference for unsaturated C18:1-CoA. Does not bind fatty acids. Plays a role in protein N-myristoylation. In Dictyostelium discoideum (Social amoeba), this protein is Acyl-CoA-binding domain-containing protein 6 homolog (acbd6).